A 456-amino-acid chain; its full sequence is Molybdate transporter 1 (456 aa).

9 helical membrane passes run 67–87, 110–130, 133–153, 177–197, 225–245, 309–329, 354–374, 377–397, and 417–437; these read LIFT…PMPV, IMAA…SGLM, VFNI…GLAF, PWLG…IVLV, VIAN…LAFI, AASV…FGAM, LLGV…VGIL, FPVG…AMAA, and LGSN…VLWM.

The protein belongs to the SLC26A/SulP transporter (TC 2.A.53) family. As to expression, strongly expressed in roots. Detected in the vascular tissues of hypocotyls, in petioles and vascular tissues of cotyledons and leaves, in mesophyll cells, stamen, sepals and siliques.

Its subcellular location is the cell membrane. The protein resides in the endomembrane system. It is found in the mitochondrion membrane. Its activity is regulated as follows. Not inhibited by sulfate. Its function is as follows. High affinity molybdate transporter. Unable to transport sulfate. This is Molybdate transporter 1 (MOT1) from Arabidopsis thaliana (Mouse-ear cress).